We begin with the raw amino-acid sequence, 467 residues long: Inactive pancreatic lipase-related protein 1 (467 aa).

A signal peptide spans 1 to 17 (MLIFWTITLFLLGAAKG). 2 disulfides stabilise this stretch: Cys-21-Cys-27 and Cys-109-Cys-120. The active-site Nucleophile is the Ser-171. Asp-194 (charge relay system) is an active-site residue. Glu-205, Arg-208, Asp-210, and Asp-213 together coordinate Ca(2+). Cys-255 and Cys-279 form a disulfide bridge. His-281 acts as the Charge relay system in catalysis. 3 disulfides stabilise this stretch: Cys-303–Cys-314, Cys-317–Cys-322, and Cys-451–Cys-467. Residues 356–467 (WRYGVSITLS…EDTLLTLTPC (112 aa)) enclose the PLAT domain.

This sequence belongs to the AB hydrolase superfamily. Lipase family. Pancreas.

The protein localises to the secreted. Its function is as follows. May function as inhibitor of dietary triglyceride digestion. Lacks detectable lipase activity towards triglycerides, diglycerides, phosphatidylcholine, galactolipids or cholesterol esters (in vitro). This chain is Inactive pancreatic lipase-related protein 1 (PNLIPRP1), found in Homo sapiens (Human).